Here is a 386-residue protein sequence, read N- to C-terminus: ADP,ATP carrier protein 1, mitochondrial (386 aa).

Residues 1–76 (MDQVQHPSVM…PSTASAICVQ (76 aa)) constitute a mitochondrion transit peptide. Solcar repeat units follow at residues 84–177 (SSFA…FKRL), 189–281 (KWFA…LKPV), and 289–375 (DSFF…LQLI). 5 helical membrane-spanning segments follow: residues 86-113 (FAIDFLMGGVSAAVSKTAAAPIERVKLL), 154-178 (TANVIRYFPTQALNFAFKDYFKRLF), 187-207 (YWKWFAGNLASGGAAGASSLL), 257-278 (FNISCVGIIVYRGLYFGMYDSL), and 292-312 (FASFVLGWLITNGAALASYPI). 2 residues coordinate ADP: R159 and K171. Position 316 (R316) interacts with ADP. An important for transport activity region spans residues 316–321 (RRRMMM). Positions 316-321 (RRRMMM) match the Nucleotide carrier signature motif motif. A helical transmembrane segment spans residues 352–372 (AGSNILRAIAGAGVLAGYDKL).

Belongs to the mitochondrial carrier (TC 2.A.29) family. Monomer.

It is found in the mitochondrion inner membrane. The enzyme catalyses ADP(in) + ATP(out) = ADP(out) + ATP(in). With respect to regulation, the matrix-open state (m-state) is inhibited by the membrane-permeable bongkrekic acid (BKA). The cytoplasmic-open state (c-state) is inhibited by the membrane-impermeable toxic inhibitor carboxyatractyloside (CATR). Functionally, ADP:ATP antiporter that mediates import of ADP into the mitochondrial matrix for ATP synthesis, and export of ATP out to fuel the cell. Cycles between the cytoplasmic-open state (c-state) and the matrix-open state (m-state): operates by the alternating access mechanism with a single substrate-binding site intermittently exposed to either the cytosolic (c-state) or matrix (m-state) side of the inner mitochondrial membrane. The chain is ADP,ATP carrier protein 1, mitochondrial (ANT1) from Gossypium hirsutum (Upland cotton).